A 78-amino-acid polypeptide reads, in one-letter code: Large ribosomal subunit protein bL28 (78 aa).

Residues 1–21 (MSRVCQVTGKRPVSGNNRSHA) are disordered.

The protein belongs to the bacterial ribosomal protein bL28 family.

This Serratia proteamaculans (strain 568) protein is Large ribosomal subunit protein bL28.